Consider the following 274-residue polypeptide: Large ribosomal subunit protein uL2 (274 aa).

Positions alanine 224–lysine 274 are disordered. Positions aspartate 229 to threonine 239 are enriched in basic and acidic residues.

It belongs to the universal ribosomal protein uL2 family. In terms of assembly, part of the 50S ribosomal subunit. Forms a bridge to the 30S subunit in the 70S ribosome.

One of the primary rRNA binding proteins. Required for association of the 30S and 50S subunits to form the 70S ribosome, for tRNA binding and peptide bond formation. It has been suggested to have peptidyltransferase activity; this is somewhat controversial. Makes several contacts with the 16S rRNA in the 70S ribosome. This Methylibium petroleiphilum (strain ATCC BAA-1232 / LMG 22953 / PM1) protein is Large ribosomal subunit protein uL2.